Consider the following 114-residue polypeptide: uncharacterized protein (114 aa).

This is an uncharacterized protein from Schizosaccharomyces pombe (strain 972 / ATCC 24843) (Fission yeast).